An 83-amino-acid chain; its full sequence is Sec-independent protein translocase protein TatA (83 aa).

A helical membrane pass occupies residues 2 to 22; it reads GLGGISIWQLLIVLVIVLLLF. Basic and acidic residues-rich tracts occupy residues 50–65 and 74–83; these read AAKQ…KVAA and AEQKEKTEAK. Residues 50–83 form a disordered region; sequence AAKQEAEEAEQKKVAAEEAAAAKTAEQKEKTEAK.

This sequence belongs to the TatA/E family. As to quaternary structure, the Tat system comprises two distinct complexes: a TatABC complex, containing multiple copies of TatA, TatB and TatC subunits, and a separate TatA complex, containing only TatA subunits. Substrates initially bind to the TatABC complex, which probably triggers association of the separate TatA complex to form the active translocon.

It localises to the cell inner membrane. In terms of biological role, part of the twin-arginine translocation (Tat) system that transports large folded proteins containing a characteristic twin-arginine motif in their signal peptide across membranes. TatA could form the protein-conducting channel of the Tat system. This Saccharophagus degradans (strain 2-40 / ATCC 43961 / DSM 17024) protein is Sec-independent protein translocase protein TatA.